A 676-amino-acid chain; its full sequence is UvrABC system protein C (676 aa).

The region spanning V16–I95 is the GIY-YIG domain. A UVR domain is found at D208–A243.

It belongs to the UvrC family. As to quaternary structure, interacts with UvrB in an incision complex.

The protein localises to the cytoplasm. In terms of biological role, the UvrABC repair system catalyzes the recognition and processing of DNA lesions. UvrC both incises the 5' and 3' sides of the lesion. The N-terminal half is responsible for the 3' incision and the C-terminal half is responsible for the 5' incision. The protein is UvrABC system protein C of Mycobacterium sp. (strain KMS).